We begin with the raw amino-acid sequence, 1042 residues long: Exosome RNA helicase MTR4 (1042 aa).

N-acetylalanine is present on Ala2. The interval 16 to 74 (DSTTAAGTKKDKEKDKGKWKGPPGSADKAGKRFDGKLQSESTNNGKNKRDVDFEGTDEP) is disordered. Basic and acidic residues predominate over residues 23–33 (TKKDKEKDKGK). Residue Lys24 forms a Glycyl lysine isopeptide (Lys-Gly) (interchain with G-Cter in SUMO2) linkage. The residue at position 40 (Ser40) is a Phosphoserine. Basic and acidic residues predominate over residues 43–52 (KAGKRFDGKL). 2 positions are modified to N6-acetyllysine: Lys51 and Lys78. ATP-binding positions include Ile139, 161–168 (AHTSAGKT), Ser164, Gly166, Lys167, and Thr168. The region spanning 148-304 (IQCVDNNQSV…WICHLHKQPC (157 aa)) is the Helicase ATP-binding domain. A DEIH box motif is present at residues 252–255 (DEIH). Lys358 is covalently cross-linked (Glycyl lysine isopeptide (Lys-Gly) (interchain with G-Cter in SUMO2)). The 173-residue stretch at 405–577 (QMTKLDFNTD…NMVLNLLRVE (173 aa)) folds into the Helicase C-terminal domain. Glycyl lysine isopeptide (Lys-Gly) (interchain with G-Cter in SUMO2) cross-links involve residues Lys684 and Lys723.

This sequence belongs to the helicase family. SKI2 subfamily. In terms of assembly, component of a TRAMP-like complex, an ATP-dependent exosome regulatory complex consisting of a helicase (MTREX), an oligadenylate polymerase (TENT4B or TENT4A), and a substrate specific RNA-binding factor (ZCCHC7 or ZCCHC8). Several TRAMP-like complexes exist with specific compositions and are associated with nuclear, or nucleolar RNA exosomes. Identified in the spliceosome C complex. Component of the poly(A) tail exosome targeting (PAXT) complex made of PABPN1, ZFC3H1 and MTREX that directs a subset of long and polyadenylated poly(A) RNAs for exosomal degradation. Component of the nuclear exosome targeting (NEXT) complex composed of MTREX, ZCCHC8, and RBM7 that directs a subset of non-coding short-lived RNAs for exosomal degradation. Interacts with ZCCHC8; this interaction bridges the interaction between RBM7 and MTREX. Binds to ZFC3H1 and RBM7 in a RNase-insensitive manner. Interacts with EXOSC10; the interaction mediates the association of MTREX with nuclear RNA exosomes. Interacts with isoform 1 of NVL in an ATP-dependent manner; the interaction is required to associate NVL with nuclear RNA exosome. Interacts with WDR74; the interaction dissociation in a late stage of rRNA synthesis is required for appropriate maturation of pre-60S particles and depends on the ATPase activity of NVL. Interacts with MPHOSPH6. Interacts with the RNA cap-binding complex proteins NCBP1 and SRRT. Interacts with NRDE2; the interaction is direct and negatively regulates MTREX function in exosomal degradation by changing its conformation precluding interaction with ZFC3H1, the RNA cap-binding complex proteins NCBP1 and SRRT, and association with the exosome. Associates with the RNA exosome complex.

The protein resides in the nucleus. It localises to the nucleoplasm. It is found in the nucleolus. Its subcellular location is the nucleus speckle. The enzyme catalyses ATP + H2O = ADP + phosphate + H(+). With respect to regulation, activated when MTREX is incorporated into NEXT complex an the nuclear RNA exosome complex. Catalyzes the ATP-dependent unwinding of RNA duplexes with a single-stranded 3' RNA extension. Central subunit of many protein complexes, namely TRAMP-like, nuclear exosome targeting (NEXT) and poly(A) tail exosome targeting (PAXT). NEXT functions as an RNA exosome cofactor that directs a subset of non-coding short-lived RNAs for exosomal degradation. NEXT is involved in surveillance and turnover of aberrant transcripts and non-coding RNAs. PAXT directs a subset of long and polyadenylated poly(A) RNAs for exosomal degradation. The RNA exosome is fundamental for the degradation of RNA in eukaryotic nuclei. Substrate targeting is facilitated by its cofactor ZCCHC8, which links to RNA-binding protein adapters. Associated with the RNA exosome complex and involved in the 3'-processing of the 7S pre-RNA to the mature 5.8S rRNA. May be involved in pre-mRNA splicing. In the context of NEXT complex can also in vitro unwind DNA:RNA heteroduplexes with a 3' poly (A) RNA tracking strand. Can promote unwinding and degradation of structured RNA substrates when associated with the nuclear exosome and its cofactors. Can displace a DNA strand while translocating on RNA to ultimately degrade the RNA within a DNA/RNA heteroduplex. Plays a role in DNA damage response. This is Exosome RNA helicase MTR4 from Homo sapiens (Human).